Reading from the N-terminus, the 549-residue chain is Probable chaperonin-like protein PrmG (549 aa).

Belongs to the chaperonin (HSP60) family.

In terms of biological role, probably plays an essential role in the productive folding of PrmA, and thus in the formation of the active PrmABCD complex. This is Probable chaperonin-like protein PrmG (prmG) from Rhodococcus jostii (strain RHA1).